Here is a 392-residue protein sequence, read N- to C-terminus: MAAAALGQIWARKLLSVPWLLCGPRRYASSSFKAADLQLEMTQKPHKKPGPGEPLVFGKTFTDHMLMVEWNDKGWGQPRIQPFQNLTLHPASSSLHYSLQLFEGMKAFKGKDQQVRLFRPWLNMDRMLRSAMRLCLPSFDKLELLECIRRLIEVDKDWVPDAAGTSLYVRPVLIGNEPSLGVSQPTRALLFVILCPVGAYFPGGSVTPVSLLADPAFIRAWVGGVGNYKLGGNYGPTVLVQQEALKRGCEQVLWLYGPDHQLTEVGTMNIFVYWTHEDGVLELVTPPLNGVILPGVVRQSLLDMAQTWGEFRVVERTITMKQLLRALEEGRVREVFGSGTACQVCPVHRILYKDRNLHIPTMENGPELILRFQKELKEIQYGIRAHEWMFPV.

The N-terminal 27 residues, 1–27, are a transit peptide targeting the mitochondrion; that stretch reads MAAAALGQIWARKLLSVPWLLCGPRRY. Tyrosine 168 contacts substrate. N6-(pyridoxal phosphate)lysine is present on lysine 229. Lysine 321 is modified (N6-acetyllysine).

Belongs to the class-IV pyridoxal-phosphate-dependent aminotransferase family. As to quaternary structure, homodimer. The cofactor is pyridoxal 5'-phosphate. As to expression, ubiquitous.

Its subcellular location is the mitochondrion. It catalyses the reaction L-leucine + 2-oxoglutarate = 4-methyl-2-oxopentanoate + L-glutamate. It carries out the reaction L-isoleucine + 2-oxoglutarate = (S)-3-methyl-2-oxopentanoate + L-glutamate. The catalysed reaction is L-valine + 2-oxoglutarate = 3-methyl-2-oxobutanoate + L-glutamate. Functionally, catalyzes the first reaction in the catabolism of the essential branched chain amino acids leucine, isoleucine, and valine. May also function as a transporter of branched chain alpha-keto acids. The chain is Branched-chain-amino-acid aminotransferase, mitochondrial (BCAT2) from Homo sapiens (Human).